Consider the following 504-residue polypeptide: Anaerobic nitric oxide reductase transcription regulator NorR (504 aa).

Asp57 is subject to 4-aspartylphosphate. In terms of domain architecture, Sigma-54 factor interaction spans 187 to 416; it reads MIGLSPGMTQ…LEHAIHRAVV (230 aa). Residues 215–222 and 278–287 each bind ATP; these read GETGTGKE and ADNGTLFLDE. A DNA-binding region (H-T-H motif) is located at residues 479-498; that stretch reads WAACARMLETDVANLHRLAK.

The protein operates within nitrogen metabolism; nitric oxide reduction. Required for the expression of anaerobic nitric oxide (NO) reductase, acts as a transcriptional activator for at least the norVW operon. Activation also requires sigma-54. The polypeptide is Anaerobic nitric oxide reductase transcription regulator NorR (Escherichia coli O9:H4 (strain HS)).